We begin with the raw amino-acid sequence, 214 residues long: Thiamine-phosphate synthase (214 aa).

4-amino-2-methyl-5-(diphosphooxymethyl)pyrimidine-binding positions include 37–41 and asparagine 73; that span reads QYREK. 2 residues coordinate Mg(2+): aspartate 74 and aspartate 93. Serine 112 is a binding site for 4-amino-2-methyl-5-(diphosphooxymethyl)pyrimidine. 139 to 141 is a 2-[(2R,5Z)-2-carboxy-4-methylthiazol-5(2H)-ylidene]ethyl phosphate binding site; it reads TIS. Lysine 142 is a 4-amino-2-methyl-5-(diphosphooxymethyl)pyrimidine binding site. Residues glycine 171 and 191-192 each bind 2-[(2R,5Z)-2-carboxy-4-methylthiazol-5(2H)-ylidene]ethyl phosphate; that span reads IS.

The protein belongs to the thiamine-phosphate synthase family. It depends on Mg(2+) as a cofactor.

It carries out the reaction 2-[(2R,5Z)-2-carboxy-4-methylthiazol-5(2H)-ylidene]ethyl phosphate + 4-amino-2-methyl-5-(diphosphooxymethyl)pyrimidine + 2 H(+) = thiamine phosphate + CO2 + diphosphate. The catalysed reaction is 2-(2-carboxy-4-methylthiazol-5-yl)ethyl phosphate + 4-amino-2-methyl-5-(diphosphooxymethyl)pyrimidine + 2 H(+) = thiamine phosphate + CO2 + diphosphate. It catalyses the reaction 4-methyl-5-(2-phosphooxyethyl)-thiazole + 4-amino-2-methyl-5-(diphosphooxymethyl)pyrimidine + H(+) = thiamine phosphate + diphosphate. Its pathway is cofactor biosynthesis; thiamine diphosphate biosynthesis; thiamine phosphate from 4-amino-2-methyl-5-diphosphomethylpyrimidine and 4-methyl-5-(2-phosphoethyl)-thiazole: step 1/1. Functionally, condenses 4-methyl-5-(beta-hydroxyethyl)thiazole monophosphate (THZ-P) and 2-methyl-4-amino-5-hydroxymethyl pyrimidine pyrophosphate (HMP-PP) to form thiamine monophosphate (TMP). The chain is Thiamine-phosphate synthase from Listeria monocytogenes serotype 4b (strain CLIP80459).